The sequence spans 234 residues: MINFIVGAIGLLIASIYDLKSREIEDYVWVSMVIFGLIYNGYLSFISHDMLYVIQSIVGFIVCFFLGFFMFLLGVGGGDGKLIMGLGALIPKYNMPIHTPLGAILNYLYLPSFPIMVVINAMFFSITLPIIIFLRNVIRGVKPKTKKEVLCMFLGEKMKVSEAIKKERLILGNHENLKLLPSAEKDCDFSKFDKNEEIWVTPAIPFVVPIFLSYLLTSIIGDKIIGIFLSVFGL.

Position 1 (methionine 1) is a topological domain, cytoplasmic. Residues 2 to 18 (INFIVGAIGLLIASIYD) traverse the membrane as a helical segment. Residues 19–23 (LKSRE) are Extracellular-facing. A helical transmembrane segment spans residues 24 to 46 (IEDYVWVSMVIFGLIYNGYLSFI). Topologically, residues 47-49 (SHD) are cytoplasmic. A helical transmembrane segment spans residues 50–72 (MLYVIQSIVGFIVCFFLGFFMFL). Residues 73-78 (LGVGGG) are Extracellular-facing. The chain crosses the membrane as a helical span at residues 79–89 (DGKLIMGLGAL). Residues 90–110 (IPKYNMPIHTPLGAILNYLYL) lie on the Cytoplasmic side of the membrane. The helical transmembrane segment at 111-139 (PSFPIMVVINAMFFSITLPIIIFLRNVIR) threads the bilayer. At 140–205 (GVKPKTKKEV…EEIWVTPAIP (66 aa)) the chain is on the extracellular side. A helical membrane pass occupies residues 206–217 (FVVPIFLSYLLT). Residues 218-234 (SIIGDKIIGIFLSVFGL) lie on the Cytoplasmic side of the membrane.

The protein belongs to the peptidase A24 family. Archaeal preflagellin peptidase subfamily.

The protein resides in the cell membrane. It carries out the reaction Cleaves the signal peptide of 3 to 12 amino acids from the N-terminal of preflagellin, usually at Arg-Gly-|- or Lys-Gly-|-, to release flagellin.. Its function is as follows. Cleaves the N-terminal leader peptide from preflagellins. The protein is Preflagellin peptidase (flaK) of Methanocaldococcus jannaschii (strain ATCC 43067 / DSM 2661 / JAL-1 / JCM 10045 / NBRC 100440) (Methanococcus jannaschii).